A 518-amino-acid polypeptide reads, in one-letter code: Ent-cassadiene hydroxylase (518 aa).

A helical membrane pass occupies residues 6–26; sequence LILALGLSVLFVLLSKLVSSA. Position 451 (Cys451) interacts with heme.

This sequence belongs to the cytochrome P450 family. The cofactor is heme.

It localises to the membrane. It catalyses the reaction ent-cassa-12,15-diene + 3 reduced [NADPH--hemoprotein reductase] + 3 O2 = ent-3beta-hydroxycassa-12,15-dien-2-one + 3 oxidized [NADPH--hemoprotein reductase] + 4 H2O + 3 H(+). Enzyme of the diterpenoid metabolism involved in the biosynthesis of antibacterial oryzalides such as phytocassane. Catalyzes the hydroxylation of ent-cassa-12,15-diene to form ent-3beta-hydroxycassa-12,15-dien-2-one. The chain is Ent-cassadiene hydroxylase (CYP71Z7) from Oryza sativa subsp. japonica (Rice).